A 41-amino-acid chain; its full sequence is Large ribosomal subunit protein bL36 (41 aa).

It belongs to the bacterial ribosomal protein bL36 family.

This Gluconacetobacter diazotrophicus (strain ATCC 49037 / DSM 5601 / CCUG 37298 / CIP 103539 / LMG 7603 / PAl5) protein is Large ribosomal subunit protein bL36.